The chain runs to 334 residues: Glucosyltransferase 3 (334 aa).

UDP-binding positions include T16, R179, and 249-254; that span reads SHKSAT.

The protein belongs to the Gtf3 glucosyltransferase family. As to quaternary structure, homotetramer; a dimer of dimers.

It functions in the pathway protein modification; protein glycosylation. In terms of biological role, required for polymorphic O-glycosylation of the serine-rich repeat protein in this bacteria. Catalyzes the second step in glycosylation by transferring glucose from UDP-glucose to the terminal GlcNAc moiety of the 3-O-(N-acetyl-alpha-D-glucosaminyl)-L-seryl-[protein] resulting from the first glycosylation step. Part of the accessory SecA2/SecY2 system specifically required to export GspB, a serine-rich repeat cell wall protein encoded upstream in the same operon. The chain is Glucosyltransferase 3 from Streptococcus gordonii.